The chain runs to 586 residues: Penicillin-binding protein activator LpoA (586 aa).

An N-terminal signal peptide occupies residues Met-1–Gly-26. Cys-27 carries the N-palmitoyl cysteine lipid modification. Cys-27 is lipidated: S-diacylglycerol cysteine.

The protein belongs to the LpoA family. In terms of assembly, interacts with PBP1a.

The protein resides in the cell outer membrane. Its function is as follows. Regulator of peptidoglycan synthesis that is essential for the function of penicillin-binding protein 1A (PBP1a). In Histophilus somni (strain 2336) (Haemophilus somnus), this protein is Penicillin-binding protein activator LpoA.